We begin with the raw amino-acid sequence, 304 residues long: MELRHLRYFVAVVEEQSFTKAADKLCIAQPPLSRQIQNLEEELGIQLLERGSRPVKTTPEGHFFYQYAIKLLSNVDQMVSMTKRIASVEKTIRIGFVGSLLFGLLPRIIHLYRQAHPNLRIELYEMGTKAQTEALKEGRIDAGFGRLKISDPAIKRTLLRNERLMVAVHASHPLNQMKDKGVHLNDLIDEKILLYPSSPKPNFSTHVMNIFSDHGLEPTKINEVREVQLALGLVAAGEGISLVPASTQSIQLFNLSYVPLLDPDAITPIYIAVRNMEESTYIYSLYETIRQIYAYEGFTEPPNW.

The HTH lysR-type domain maps to 1 to 58; it reads MELRHLRYFVAVVEEQSFTKAADKLCIAQPPLSRQIQNLEEELGIQLLERGSRPVKTT. A DNA-binding region (H-T-H motif) is located at residues 18-37; it reads FTKAADKLCIAQPPLSRQIQ. Benzoate contacts are provided by Ser-99 and Leu-104. A cis,cis-muconate-binding site is contributed by Ser-99. Thr-128 lines the cis,cis-muconate pocket. Positions 144, 160, and 202 each coordinate benzoate. Residue Phe-203 participates in cis,cis-muconate binding. Tyr-293 provides a ligand contact to benzoate.

The protein belongs to the LysR transcriptional regulatory family. In terms of assembly, homotetramer; dimer of dimers. The dimers can also associate to form linear, higher oligomers (in vitro).

In terms of biological role, positive regulator of the ben and cat genes for benzoate degradation. BenM is necessary for ben gene expression but not for expression of the cat genes, which can be regulated by CatM. Binds to the inducers cis,cis-muconate and benzoate. The sequence is that of HTH-type transcriptional regulator BenM (benM) from Acinetobacter baylyi (strain ATCC 33305 / BD413 / ADP1).